We begin with the raw amino-acid sequence, 287 residues long: Large ribosomal subunit protein uL2 (287 aa).

Residues 221-287 are disordered; it reads RGSVMNPCDH…SKRSRGGRDS (67 aa). The span at 258-287 shows a compositional bias: basic residues; the sequence is KTRKRNKPSNRFVLRKRRRTSKRSRGGRDS.

It belongs to the universal ribosomal protein uL2 family. Part of the 50S ribosomal subunit. Forms a bridge to the 30S subunit in the 70S ribosome.

Functionally, one of the primary rRNA binding proteins. Required for association of the 30S and 50S subunits to form the 70S ribosome, for tRNA binding and peptide bond formation. It has been suggested to have peptidyltransferase activity; this is somewhat controversial. Makes several contacts with the 16S rRNA in the 70S ribosome. This is Large ribosomal subunit protein uL2 from Prochlorococcus marinus (strain MIT 9303).